A 299-amino-acid polypeptide reads, in one-letter code: Heterodisulfide reductase subunit B-like protein (299 aa).

Belongs to the HdrB family. As to quaternary structure, the heterodisulfide reductase is composed of three subunits; HdlA, HdlB and HdlC. It forms a complex with the F420-non-reducing hydrogenase (Mvh), which provides the reducing equivalents to the heterodisulfide reductase.

Its subcellular location is the cytoplasm. Functionally, has oxidoreductase activity. The Hdl and Mvh subunits may together mediate electron transfer from hydrogen to an unidentified electron acceptor on the cytoplasmic side of the membrane. The chain is Heterodisulfide reductase subunit B-like protein (hdlB) from Archaeoglobus profundus (strain DSM 5631 / JCM 9629 / NBRC 100127 / Av18).